The sequence spans 423 residues: Serine hydroxymethyltransferase (423 aa).

(6S)-5,6,7,8-tetrahydrofolate contacts are provided by residues leucine 120 and 124 to 126 (GHL). Position 229 is an N6-(pyridoxal phosphate)lysine (lysine 229). 353–355 (SPF) provides a ligand contact to (6S)-5,6,7,8-tetrahydrofolate.

The protein belongs to the SHMT family. As to quaternary structure, homodimer. Pyridoxal 5'-phosphate is required as a cofactor.

The protein resides in the cytoplasm. It carries out the reaction (6R)-5,10-methylene-5,6,7,8-tetrahydrofolate + glycine + H2O = (6S)-5,6,7,8-tetrahydrofolate + L-serine. The protein operates within one-carbon metabolism; tetrahydrofolate interconversion. It participates in amino-acid biosynthesis; glycine biosynthesis; glycine from L-serine: step 1/1. In terms of biological role, catalyzes the reversible interconversion of serine and glycine with tetrahydrofolate (THF) serving as the one-carbon carrier. This reaction serves as the major source of one-carbon groups required for the biosynthesis of purines, thymidylate, methionine, and other important biomolecules. Also exhibits THF-independent aldolase activity toward beta-hydroxyamino acids, producing glycine and aldehydes, via a retro-aldol mechanism. The polypeptide is Serine hydroxymethyltransferase (Prochlorococcus marinus subsp. pastoris (strain CCMP1986 / NIES-2087 / MED4)).